We begin with the raw amino-acid sequence, 1997 residues long: Chromatin-remodeling ATPase INO80 (1997 aa).

3 disordered regions span residues 1–378 (MDHF…AAPS), 397–579 (IAAP…AENE), and 674–858 (ERKK…EKVV). Over residues 12–25 (PHFDEDGTEGRGDR) the composition is skewed to basic and acidic residues. The segment covering 32 to 41 (GPAPPPPPPR) has biased composition (pro residues). Positions 49–64 (NPVSSNSAVQSQAAAA) are enriched in low complexity. Positions 89–107 (STNSMRATPHSSSSFNLRS) are enriched in polar residues. Residues 108–117 (PTREPSEYRH) show a composition bias toward basic and acidic residues. 3 stretches are compositionally biased toward low complexity: residues 118-156 (PLSSLATPAPFAASPPTSIANANNTNNNNALGAAGSLSS), 203-230 (SLQAPPAITPIAGLSAPAPASGSLPLSA), and 240-251 (SSSSQPPARASQ). The segment covering 264–276 (SFRDRDSSVREKS) has biased composition (basic and acidic residues). Polar residues predominate over residues 288 to 297 (EASNGISGSS). The segment covering 298–317 (PRKDRDRDRDHRGTTRESQR) has biased composition (basic and acidic residues). Composition is skewed to polar residues over residues 318-340 (RSVSGHSDTGSSWRNATQTSASN) and 366-378 (VDNTTSSSIAAPS). Positions 411-420 (SPRLSLRPPS) are enriched in low complexity. 3 stretches are compositionally biased toward polar residues: residues 433-442 (NPTNGTTSTA), 451-465 (SPPSKMSPGTSTNPS), and 472-481 (SFSNILSSSE). Composition is skewed to basic and acidic residues over residues 500-519 (VPMKVERADSSEKVVKEKKE) and 529-540 (RISDIRHSESTP). The stretch at 666 to 735 (ERELFAEKER…VQQTRLILQK (70 aa)) forms a coiled coil. Low complexity predominate over residues 689 to 707 (MATTMEAKAAALARASAAQ). Basic and acidic residues predominate over residues 709 to 723 (EAERQKYMREAERAN). Residues 769–781 (TKGKGRAGARPKK) are compositionally biased toward basic residues. Residues 782–793 (SKEQKQAEKDAA) are compositionally biased toward basic and acidic residues. The segment covering 794 to 806 (EAAQAALDAGLEL) has biased composition (low complexity). Positions 824–858 (APKEADVDKDKENKEPQEPKEPKEPKEKVIKEKVV) are enriched in basic and acidic residues. Positions 881-1006 (IWRDLARKDV…SHFIGKKIKT (126 aa)) constitute a DBINO domain. Positions 1130-1302 (VNLYEQGING…WALLHFIMPS (173 aa)) constitute a Helicase ATP-binding domain. 1143 to 1150 (DEMGLGKT) serves as a coordination point for ATP. Positions 1253–1256 (DEAQ) match the DEAQ box motif. A Helicase C-terminal domain is found at 1702–1858 (KLDELLRELK…GSSAAGGGVD (157 aa)). The segment covering 1891 to 1902 (ELLESGELDKMQ) has biased composition (basic and acidic residues). Positions 1891–1986 (ELLESGELDK…GSKKAKTTKQ (96 aa)) are disordered. Positions 1903–1914 (KKSRGGNKRKRG) are enriched in basic residues. Residues 1919 to 1933 (EGKEVSLDEMYHEGE) are compositionally biased toward basic and acidic residues. Gly residues predominate over residues 1954 to 1967 (AAGGEGGDGKGAVG). The segment covering 1970 to 1985 (AKKRKTGGSKKAKTTK) has biased composition (basic residues).

This sequence belongs to the SNF2/RAD54 helicase family. In terms of assembly, component of the INO80 chromatin-remodeling complex.

The protein resides in the nucleus. The enzyme catalyses ATP + H2O = ADP + phosphate + H(+). Its function is as follows. ATPase component of the INO80 complex which remodels chromatin by shifting nucleosomes and is involved in DNA repair. This chain is Chromatin-remodeling ATPase INO80 (crf2-1), found in Neurospora crassa (strain ATCC 24698 / 74-OR23-1A / CBS 708.71 / DSM 1257 / FGSC 987).